The chain runs to 248 residues: Transcription factor Spi-C (248 aa).

The segment at residues 111–194 is a DNA-binding region (ETS); sequence LRLFEYLHES…IRRKLTYQFS (84 aa).

The protein belongs to the ETS family. In terms of assembly, binds DNA as a monomer.

The protein localises to the nucleus. In terms of biological role, controls the development of red pulp macrophages required for red blood cells recycling and iron homeostasis. Transcription factor that binds to the PU-box, a purine-rich DNA sequence (5'-GAGGA[AT]-3') that can act as a lymphoid-specific enhancer. Regulates VCAM1 gene expression. In Bos taurus (Bovine), this protein is Transcription factor Spi-C (SPIC).